The chain runs to 522 residues: Glutathione reductase, mitochondrial (522 aa).

A mitochondrion-targeting transit peptide spans 1–43 (MALLPRALSAGAGPSWRRAARAFRGFLLLLPEPAALTRALSRA). Residues S74 and G75 each contribute to the FAD site. S74 contacts glutathione. R81 contacts glutathione. E94 contributes to the FAD binding site. Position 97 is an N6-acetyllysine (K97). The FAD site is built by T101, C102, and K110. Cysteines 102 and 107 form a disulfide. Y158 provides a ligand contact to glutathione. FAD is bound at residue A174. NADP(+) is bound by residues A239, I242, E245, R262, R268, and G334. D375 is an FAD binding site. L381 contributes to the NADP(+) binding site. T383 lines the FAD pocket. Glutathione is bound at residue R391. V414 serves as a coordination point for NADP(+). H511 provides a ligand contact to FAD. The Proton acceptor role is filled by H511.

It belongs to the class-I pyridine nucleotide-disulfide oxidoreductase family. In terms of assembly, homodimer; disulfide-linked. The cofactor is FAD.

It is found in the mitochondrion. The protein resides in the cytoplasm. It catalyses the reaction 2 glutathione + NADP(+) = glutathione disulfide + NADPH + H(+). Functionally, catalyzes the reduction of glutathione disulfide (GSSG) to reduced glutathione (GSH). Constitutes the major mechanism to maintain a high GSH:GSSG ratio in the cytosol. The chain is Glutathione reductase, mitochondrial (GSR) from Homo sapiens (Human).